The following is a 384-amino-acid chain: Glucans biosynthesis protein C (384 aa).

The next 10 helical transmembrane spans lie at 17-37 (AWLM…THSW), 54-74 (FIHA…SYML), 91-111 (VGIP…ILLQ), 140-160 (LWFL…FTWF), 173-193 (AISL…YAAI), 212-232 (FIVM…LAFI), 240-260 (FTTP…AYLL), 274-294 (TESV…FSLG), 311-331 (ASLF…AYIT), and 338-358 (LIGF…LYEI).

Belongs to the acyltransferase 3 family. OpgC subfamily.

The protein resides in the cell membrane. It functions in the pathway glycan metabolism; osmoregulated periplasmic glucan (OPG) biosynthesis. Functionally, necessary for the succinyl substitution of periplasmic glucans. Could catalyze the transfer of succinyl residues from the cytoplasmic side of the membrane to the nascent glucan backbones on the periplasmic side of the membrane. In Salmonella choleraesuis (strain SC-B67), this protein is Glucans biosynthesis protein C.